The following is a 62-amino-acid chain: Large ribosomal subunit protein uL29 (62 aa).

This sequence belongs to the universal ribosomal protein uL29 family.

This chain is Large ribosomal subunit protein uL29, found in Enterococcus faecalis (strain ATCC 700802 / V583).